The chain runs to 105 residues: uncharacterized protein (105 aa).

The next 3 helical transmembrane spans lie at 3–23 (ISPLIAGLIGGFTAAILQALF), 41–61 (DLVNWIINHLFGTTLGMALVS), and 63–83 (AFPVLTVVGIFIGALITTFIY).

The protein localises to the cell membrane. This is an uncharacterized protein from Methanocaldococcus jannaschii (strain ATCC 43067 / DSM 2661 / JAL-1 / JCM 10045 / NBRC 100440) (Methanococcus jannaschii).